Consider the following 1166-residue polypeptide: Serine-aspartate repeat-containing protein E (1166 aa).

The N-terminal stretch at 1-52 (MINRDNKKAITKKGMISNRLNKFSIRKYTVGTASILVGTTLIFGLGNQEAKA) is a signal peptide. The YSIRK-G/S signaling motif motif lies at 23–34 (FSIRKYTVGTAS). The tract at residues 53-606 (AENTSTENAK…GDGTVKPEEK (554 aa)) is ligand binding A region. The tract at residues 54-253 (ENTSTENAKQ…HSTKPVATAP (200 aa)) is disordered. The span at 61–75 (AKQDDATTSDNKEVV) shows a compositional bias: basic and acidic residues. Positions 77-90 (ETENNSTTENNSTN) are enriched in low complexity. Residues 92-108 (IKKETNTDSQPEAKKES) are compositionally biased toward basic and acidic residues. Positions 118 to 129 (NNVTATTETKPQ) are enriched in polar residues. A compositionally biased stretch (basic and acidic residues) spans 130-145 (NIEKENVKPSTDKTAT). The segment covering 166–178 (TTKPSTSEPSTSE) has biased composition (low complexity). Over residues 179–212 (IQTKPTTPQESTNIENSQPQPTPSKVDNQVTDAT) the composition is skewed to polar residues. Positions 221 to 246 (SKEELKKNPEKLKELVRNDSNTDHST) are enriched in basic and acidic residues. CNA-B domains lie at 607-719 (LYKI…YKEP), 720-829 (KYNL…YKTP), and 830-940 (KYSL…EEDT). Positions 904-1141 (VTNTTEDDKD…TGSENNGSNN (238 aa)) are disordered. Acidic residues-rich tracts occupy residues 908–918 (TEDDKDADGGE) and 935–1105 (YFEE…DSDS). The LPXTG sorting signal signature appears at 1129 to 1133 (LPETG). Thr1132 carries the post-translational modification Pentaglycyl murein peptidoglycan amidated threonine. The propeptide at 1133–1166 (GSENNGSNNATLFGGLFAALGSLLLFGRRKKQNK) is removed by sortase.

Belongs to the serine-aspartate repeat-containing protein (SDr) family. As to quaternary structure, interacts with host complement factor H/CFAH (via C-terminus). Interacts with host complement regulator C4BPA.

It is found in the secreted. The protein resides in the cell wall. In terms of biological role, cell surface-associated calcium-binding protein which plays an important role in adhesion and pathogenesis. Contributes to the resistance to killing by innate immune components in blood and thus attenuates bacterial clearance by interacting with host complement factor H/CFAH and modulating its activity. Also inhibits bacterial opsonization and killing by interacting with host complement regulator C4BPA and thus inhibiting classical complement pathway activation. This Staphylococcus aureus (strain COL) protein is Serine-aspartate repeat-containing protein E (sdrE).